The following is a 289-amino-acid chain: MKLAVYGKGGIGKSTTSCNISIALAKRGKKVLQIGCDPKSDSTFTLTGFLIPTIIDTLQAKDYHYEDVWPEDVIYQGYAGVDCVEAGGPPAGAGCGGYVVGETVKLLKEFNAFYEYDVILFDVLGDVVCGGFAAPLNYADYCIIVTDNGFDALFAANRITASVREKARTHPLRLAGLIGNRTKKRDLIEKYVETCPMPILEVLPLIEDIRVSRVKGKTLFEMTESEPTLQFVCDFYLNIADQLLTQPEGVIPRELGDRELFNLLSNFYLNSSNSTNTTLKNETNLFDLV.

ATP-binding positions include 10–15 (GIGKST) and Lys-39. Ser-14 is a binding site for Mg(2+). The [4Fe-4S] cluster site is built by Cys-95 and Cys-129. Residue 180-181 (NR) participates in ATP binding.

This sequence belongs to the NifH/BchL/ChlL family. Homodimer. Protochlorophyllide reductase is composed of three subunits; ChlL, ChlN and ChlB. The cofactor is [4Fe-4S] cluster.

It localises to the plastid. It is found in the chloroplast. The catalysed reaction is chlorophyllide a + oxidized 2[4Fe-4S]-[ferredoxin] + 2 ADP + 2 phosphate = protochlorophyllide a + reduced 2[4Fe-4S]-[ferredoxin] + 2 ATP + 2 H2O. Its pathway is porphyrin-containing compound metabolism; chlorophyll biosynthesis (light-independent). In terms of biological role, component of the dark-operative protochlorophyllide reductase (DPOR) that uses Mg-ATP and reduced ferredoxin to reduce ring D of protochlorophyllide (Pchlide) to form chlorophyllide a (Chlide). This reaction is light-independent. The L component serves as a unique electron donor to the NB-component of the complex, and binds Mg-ATP. The polypeptide is Light-independent protochlorophyllide reductase iron-sulfur ATP-binding protein (Tetradesmus obliquus (Green alga)).